Here is a 264-residue protein sequence, read N- to C-terminus: NAD kinase (264 aa).

The active-site Proton acceptor is the Asp-45. Residues Asp-45 to Gly-46, His-50, Asn-121 to Glu-122, Arg-147, Asp-149, Ala-184, and Gln-224 contribute to the NAD(+) site.

The protein belongs to the NAD kinase family. A divalent metal cation is required as a cofactor.

It is found in the cytoplasm. The enzyme catalyses NAD(+) + ATP = ADP + NADP(+) + H(+). Its function is as follows. Involved in the regulation of the intracellular balance of NAD and NADP, and is a key enzyme in the biosynthesis of NADP. Catalyzes specifically the phosphorylation on 2'-hydroxyl of the adenosine moiety of NAD to yield NADP. The protein is NAD kinase of Lysinibacillus sphaericus (strain C3-41).